Here is a 246-residue protein sequence, read N- to C-terminus: MAITMRQMLEAGVHFGHQTRFWNPKMAPFIFGHRNKIHIINLEKTLPMYNDALKYVRQLAANRGTILFVGTKRQSRDTIAQEALRAGMPYVNARWLGGMLTNFKTLKVSIKRLKDMEAAVEAGELEKMSKKEALLFEREIAKLQKSIGGVKDMGGIPDAIFVVDVGYHKIAVTEANKLGVPVIAVVDTNHSPEGVDYVIPGNDDSSKAVALYAQGVADAILEGRANAVNEVVQAVRGDDEYVEENA.

The protein belongs to the universal ribosomal protein uS2 family.

This chain is Small ribosomal subunit protein uS2, found in Burkholderia pseudomallei (strain 668).